The chain runs to 511 residues: Glutamyl-tRNA(Gln) amidotransferase subunit B, mitochondrial (511 aa).

The N-terminal 6 residues, 1–6 (MLRRYL), are a transit peptide targeting the mitochondrion.

The protein belongs to the GatB/GatE family. GatB subfamily. Subunit of the heterotrimeric GatFAB amidotransferase (AdT) complex, composed of A, B and F subunits.

Its subcellular location is the mitochondrion. The enzyme catalyses L-glutamyl-tRNA(Gln) + L-glutamine + ATP + H2O = L-glutaminyl-tRNA(Gln) + L-glutamate + ADP + phosphate + H(+). In terms of biological role, allows the formation of correctly charged Gln-tRNA(Gln) through the transamidation of misacylated Glu-tRNA(Gln) in the mitochondria. The reaction takes place in the presence of glutamine and ATP through an activated gamma-phospho-Glu-tRNA(Gln). This Lodderomyces elongisporus (strain ATCC 11503 / CBS 2605 / JCM 1781 / NBRC 1676 / NRRL YB-4239) (Yeast) protein is Glutamyl-tRNA(Gln) amidotransferase subunit B, mitochondrial.